The chain runs to 88 residues: Phosphocarrier protein HPr (88 aa).

One can recognise an HPr domain in the interval 1-88 (MKKIQVVVKD…KAVLEKHQVI (88 aa)). His15 functions as the Pros-phosphohistidine intermediate in the catalytic mechanism. Ser47 is subject to Phosphoserine; by HPrK/P.

This sequence belongs to the HPr family.

It localises to the cytoplasm. Its activity is regulated as follows. Phosphorylation on Ser-47 inhibits the phosphoryl transfer from enzyme I to HPr. Functionally, general (non sugar-specific) component of the phosphoenolpyruvate-dependent sugar phosphotransferase system (sugar PTS). This major carbohydrate active-transport system catalyzes the phosphorylation of incoming sugar substrates concomitantly with their translocation across the cell membrane. The phosphoryl group from phosphoenolpyruvate (PEP) is transferred to the phosphoryl carrier protein HPr by enzyme I. Phospho-HPr then transfers it to the PTS EIIA domain. P-Ser-HPr interacts with the catabolite control protein A (CcpA), forming a complex that binds to DNA at the catabolite response elements cre, operator sites preceding a large number of catabolite-regulated genes. Thus, P-Ser-HPr is a corepressor in carbon catabolite repression (CCR), a mechanism that allows bacteria to coordinate and optimize the utilization of available carbon sources. P-Ser-HPr also plays a role in inducer exclusion, in which it probably interacts with several non-PTS permeases and inhibits their transport activity. In Mycoplasma pneumoniae (strain ATCC 29342 / M129 / Subtype 1) (Mycoplasmoides pneumoniae), this protein is Phosphocarrier protein HPr (ptsH).